The following is a 288-amino-acid chain: 33 kDa chaperonin (288 aa).

Intrachain disulfides connect cysteine 236–cysteine 238 and cysteine 269–cysteine 272.

It belongs to the HSP33 family. Under oxidizing conditions two disulfide bonds are formed involving the reactive cysteines. Under reducing conditions zinc is bound to the reactive cysteines and the protein is inactive.

Its subcellular location is the cytoplasm. Redox regulated molecular chaperone. Protects both thermally unfolding and oxidatively damaged proteins from irreversible aggregation. Plays an important role in the bacterial defense system toward oxidative stress. The chain is 33 kDa chaperonin from Lactococcus lactis subsp. cremoris (strain MG1363).